We begin with the raw amino-acid sequence, 119 residues long: uncharacterized protein (119 aa).

A run of 3 helical transmembrane segments spans residues 28-48, 55-75, and 80-100; these read AWTT…HLVF, IEVV…NLAI, and PIGK…GIIV.

It to M.tuberculosis Rv1342c.

Its subcellular location is the cell membrane. This is an uncharacterized protein from Mycobacterium leprae (strain TN).